A 248-amino-acid chain; its full sequence is Thioesterase FSL2 (248 aa).

Residues Ser125, Asp195, and His223 each act as charge relay system in the active site.

This sequence belongs to the LovG family.

It participates in secondary metabolite biosynthesis. Thioesterase; part of the gene cluster that mediates the biosynthesis of fusarielins F, G and H, decaketide compounds with 5 methylations and a decaline core that act as mycoestrogens as they stimulate growth of MCF-7 breast cancer cells. The initial compound in the pathway is produced by the reducing polyketide synthase FSL1. FSL1 lacks an active enoyl reductase (ER) domain and biosynthesis of fusarielins relies on the trans-acting enoyl reductase FSL5, before it is released through hydrolysis catalyzed by the thioesterase FSL2. Fusarielins F, G, and H have a C11=C12 cis double bond and is fully reduced between C10 and C11 and between C12 and C13. FSL3 can be involved in the formation of the C11=C12 cis double bond by moving a hypothetical C10=C11 or C12=C13 trans double bond to form prefusarielin. Prefusarielin is oxygenated at C15 and C16 by the cytochrome P450 monooxygenase FSL4, resulting in fusarielin F, which subsequently is epoxidized into fusarielin G by the same enzyme. The final step in the pathway is a reduction of the carboxylic acid moiety to yield fusarielin H via a still undetermined mechanism. This Gibberella zeae (strain ATCC MYA-4620 / CBS 123657 / FGSC 9075 / NRRL 31084 / PH-1) (Wheat head blight fungus) protein is Thioesterase FSL2.